A 292-amino-acid chain; its full sequence is 11-beta-hydroxysteroid dehydrogenase 1 (292 aa).

The Cytoplasmic portion of the chain corresponds to 2 to 7 (AFMKKY). The helical; Signal-anchor for type II membrane protein transmembrane segment at 8–24 (LLPLLGLFLAYYYYSAN) threads the bilayer. Residues 25–292 (EEFRPEMLQG…KFDISKLVNN (268 aa)) are Lumenal-facing. NADP(+)-binding positions include 41 to 67 (GASK…TARS), 92 to 93 (TM), and 119 to 121 (NHI). N-linked (GlcNAc...) asparagine glycans are attached at residues Asn123 and Asn162. Residue Ser170 participates in substrate binding. The Proton acceptor role is filled by Tyr183. 183 to 187 (YSASK) is an NADP(+) binding site. A glycan (N-linked (GlcNAc...) asparagine) is linked at Asn207. 218–222 (IDTDT) provides a ligand contact to NADP(+).

The protein belongs to the short-chain dehydrogenases/reductases (SDR) family. Homodimer. In terms of processing, glycosylated. Expressed in the eye.

Its subcellular location is the endoplasmic reticulum membrane. The protein resides in the microsome membrane. It catalyses the reaction an 11beta-hydroxysteroid + NADP(+) = an 11-oxosteroid + NADPH + H(+). The enzyme catalyses corticosterone + NADP(+) = 11-dehydrocorticosterone + NADPH + H(+). It carries out the reaction cortisone + NADPH + H(+) = cortisol + NADP(+). The catalysed reaction is a 7beta-hydroxysteroid + NADP(+) = a 7-oxosteroid + NADPH + H(+). It catalyses the reaction 7-oxocholesterol + NADPH + H(+) = 7beta-hydroxycholesterol + NADP(+). The enzyme catalyses chenodeoxycholate + NADP(+) = 7-oxolithocholate + NADPH + H(+). It carries out the reaction 7-oxolithocholate + NADPH + H(+) = ursodeoxycholate + NADP(+). The catalysed reaction is glycochenodeoxycholate + NADP(+) = 7-oxoglycolithocholate + NADPH + H(+). It catalyses the reaction taurochenodeoxycholate + NADP(+) = 7-oxotaurolithocholate + NADPH + H(+). The enzyme catalyses tauroursodeoxycholate + NADP(+) = 7-oxotaurolithocholate + NADPH + H(+). It carries out the reaction glycoursodeoxycholate + NADP(+) = 7-oxoglycolithocholate + NADPH + H(+). The catalysed reaction is 7-oxopregnenolone + NADPH + H(+) = 7beta-hydroxypregnenolone + NADP(+). It catalyses the reaction 3beta,7alpha-dihydroxyandrost-5-en-17-one + NADP(+) = 3beta-hydroxy-5-androstene-7,17-dione + NADPH + H(+). The enzyme catalyses 3beta-hydroxy-5-androstene-7,17-dione + NADPH + H(+) = 3beta,7beta-dihydroxyandrost-5-en-17-one + NADP(+). It carries out the reaction 3beta-hydroxy-5alpha-androstane-7,17-dione + NADPH + H(+) = 3beta,7beta-dihydroxy-5alpha-androstan-17-one + NADP(+). The protein operates within steroid metabolism. Its function is as follows. Controls the reversible conversion of biologically active glucocorticoids such as cortisone to cortisol, and 11-dehydrocorticosterone to corticosterone in the presence of NADP(H). Participates in the corticosteroid receptor-mediated anti-inflammatory response, as well as metabolic and homeostatic processes. Plays a role in the secretion of aqueous humor in the eye, maintaining a normotensive, intraocular environment. Bidirectional in vitro, predominantly functions as a reductase in vivo, thereby increasing the concentration of active glucocorticoids. It has broad substrate specificity, besides glucocorticoids, it accepts other steroid and sterol substrates. It has broad substrate specificity, besides glucocorticoids, it accepts other steroid and sterol substrates. Interconverts 7-oxo- and 7-hydroxy-neurosteroids such as 7-oxopregnenolone and 7beta-hydroxypregnenolone, 7-oxodehydroepiandrosterone (3beta-hydroxy-5-androstene-7,17-dione) and 7beta-hydroxydehydroepiandrosterone (3beta,7beta-dihydroxyandrost-5-en-17-one), among others. Catalyzes the stereo-specific conversion of the major dietary oxysterol, 7-ketocholesterol (7-oxocholesterol), into the more polar 7-beta-hydroxycholesterol metabolite. 7-oxocholesterol is one of the most important oxysterols, it participates in several events such as induction of apoptosis, accumulation in atherosclerotic lesions, lipid peroxidation, and induction of foam cell formation. Mediates the 7-oxo reduction of 7-oxolithocholate mainly to chenodeoxycholate, and to a lesser extent to ursodeoxycholate, both in its free form and when conjugated to glycine or taurine, providing a link between glucocorticoid activation and bile acid metabolism. Catalyzes the synthesis of 7-beta-25-dihydroxycholesterol from 7-oxo-25-hydroxycholesterol in vitro, which acts as a ligand for the G-protein-coupled receptor (GPCR) Epstein-Barr virus-induced gene 2 (EBI2) and may thereby regulate immune cell migration. In Oryctolagus cuniculus (Rabbit), this protein is 11-beta-hydroxysteroid dehydrogenase 1.